A 266-amino-acid chain; its full sequence is tRNA (guanine-N(1)-)-methyltransferase (266 aa).

S-adenosyl-L-methionine contacts are provided by residues G113 and L137–L142.

This sequence belongs to the RNA methyltransferase TrmD family. In terms of assembly, homodimer.

It is found in the cytoplasm. The enzyme catalyses guanosine(37) in tRNA + S-adenosyl-L-methionine = N(1)-methylguanosine(37) in tRNA + S-adenosyl-L-homocysteine + H(+). In terms of biological role, specifically methylates guanosine-37 in various tRNAs. The sequence is that of tRNA (guanine-N(1)-)-methyltransferase from Paenarthrobacter aurescens (strain TC1).